A 448-amino-acid chain; its full sequence is Probable glycine dehydrogenase (decarboxylating) subunit 1 (448 aa).

It belongs to the GcvP family. N-terminal subunit subfamily. In terms of assembly, the glycine cleavage system is composed of four proteins: P, T, L and H. In this organism, the P 'protein' is a heterodimer of two subunits.

The enzyme catalyses N(6)-[(R)-lipoyl]-L-lysyl-[glycine-cleavage complex H protein] + glycine + H(+) = N(6)-[(R)-S(8)-aminomethyldihydrolipoyl]-L-lysyl-[glycine-cleavage complex H protein] + CO2. The glycine cleavage system catalyzes the degradation of glycine. The P protein binds the alpha-amino group of glycine through its pyridoxal phosphate cofactor; CO(2) is released and the remaining methylamine moiety is then transferred to the lipoamide cofactor of the H protein. This chain is Probable glycine dehydrogenase (decarboxylating) subunit 1, found in Parvibaculum lavamentivorans (strain DS-1 / DSM 13023 / NCIMB 13966).